The following is a 241-amino-acid chain: MAEEQPQVELFVKAGSDGAKIGNCPFSQRLFMVLWLKGVTFNVTTVDTKRRTETVHKLCPGGQLPFLLYGTEVHTDTNKIEEFLEAVLCPPRYPKLAALNPESNTAGVDIFAKFSAYIKNSNPALNDNLEKGLLKALKILDNYLTSPLPEEVDETSAEDEGISQRKFLDGNELTLADCNLLPKLHIVQVVCKKNRGFTIPEVFRGVHRYLSNAYAREEFASTCPDDEEIELAYEQVAKALK.

A2 carries the N-acetylalanine modification. The segment at 2-90 is required for insertion into the membrane; it reads AEEQPQVELF…EEFLEAVLCP (89 aa). K13 is modified (N6-acetyllysine). Residues 24 to 27 carry the G-site motif; sequence CPFS. Cysteines 24 and 59 form a disulfide. The chain crosses the membrane as a helical span at residues 26–46; sequence FSQRLFMVLWLKGVTFNVTTV. A GST C-terminal domain is found at 93-233; it reads YPKLAALNPE…PDDEEIELAY (141 aa). The residue at position 119 (K119) is an N6-acetyllysine. S121 bears the Phosphoserine mark. Residue K131 is modified to N6-acetyllysine. S156 and S211 each carry phosphoserine. At Y233 the chain carries Phosphotyrosine.

It belongs to the chloride channel CLIC family. As to quaternary structure, monomer. Homodimer (in vitro). Interacts with TRAPPC2. Dimerization requires a conformation change that leads to the exposure of a large hydrophobic surface. In vivo, this may lead to membrane insertion.

The protein resides in the nucleus. Its subcellular location is the nucleus membrane. It is found in the cytoplasm. It localises to the cell membrane. The protein localises to the endoplasmic reticulum. It catalyses the reaction L-dehydroascorbate + 2 glutathione = glutathione disulfide + L-ascorbate. It carries out the reaction chloride(in) = chloride(out). The catalysed reaction is iodide(out) = iodide(in). The enzyme catalyses thiocyanate(in) = thiocyanate(out). It catalyses the reaction nitrate(in) = nitrate(out). It carries out the reaction bromide(in) = bromide(out). The catalysed reaction is fluoride(in) = fluoride(out). Functionally, in the soluble state, catalyzes glutaredoxin-like thiol disulfide exchange reactions with reduced glutathione as electron donor. Reduces selenite and dehydroascorbate and may act as an antioxidant during oxidative stress response. Can insert into membranes and form voltage-dependent multi-ion conductive channels. Membrane insertion seems to be redox-regulated and may occur only under oxidizing conditions. Involved in regulation of the cell cycle. This chain is Chloride intracellular channel protein 1 (CLIC1), found in Oryctolagus cuniculus (Rabbit).